A 92-amino-acid polypeptide reads, in one-letter code: Small ribosomal subunit protein uS19 (92 aa).

Belongs to the universal ribosomal protein uS19 family.

Protein S19 forms a complex with S13 that binds strongly to the 16S ribosomal RNA. The protein is Small ribosomal subunit protein uS19 of Acidiphilium cryptum (strain JF-5).